The primary structure comprises 214 residues: Charged multivesicular body protein 2b (214 aa).

A coiled-coil region spans residues 25-55 (QRQIARDRTALEKQEKQLEMEIKKMAKTGNR). The segment at 178–199 (MAHAPSAARKTPSAATAKADGI) is disordered. An MIT-interacting motif motif is present at residues 202–212 (EDIERQLKALG).

Belongs to the SNF7 family. In terms of assembly, probable core component of the endosomal sorting required for transport complex III (ESCRT-III). ESCRT-III components are thought to multimerize to form a flat lattice on the perimeter membrane of the endosome.

It is found in the cytoplasm. The protein localises to the cytosol. The protein resides in the late endosome membrane. Functionally, probable core component of the endosomal sorting required for transport complex III (ESCRT-III) which is involved in multivesicular bodies (MVBs) formation and sorting of endosomal cargo proteins into MVBs. MVBs contain intraluminal vesicles (ILVs) that are generated by invagination and scission from the limiting membrane of the endosome and mostly are delivered to lysosomes enabling degradation of membrane proteins, such as stimulated growth factor receptors, lysosomal enzymes and lipids. The sequence is that of Charged multivesicular body protein 2b (chmp2b) from Danio rerio (Zebrafish).